The chain runs to 424 residues: Endochitinase 1 (424 aa).

The signal sequence occupies residues 1–22; the sequence is MPSLFAQSLAIIATLQATLGLA. The 364-residue stretch at 39–402 folds into the GH18 domain; sequence YVNAVYFTNW…GTSSNKLGGP (364 aa). N-linked (GlcNAc...) asparagine glycosylation is found at Asn74, Asn78, and Asn96. Residues 103-104 and 130-133 each bind chitin; these read GN and GGWT. Glu172 (proton donor) is an active-site residue. Chitin is bound by residues Tyr173 and 238-241; that span reads MAYD. Residues Asn248 and Asn347 are each glycosylated (N-linked (GlcNAc...) asparagine). Trp379 is a chitin binding site. Residues 385–412 are disordered; sequence RQGPDSLIGTSSNKLGGPDTTENLLNYP. Residues 392–408 show a composition bias toward polar residues; sequence IGTSSNKLGGPDTTENL.

This sequence belongs to the glycosyl hydrolase 18 family. Chitinase class V subfamily.

Its subcellular location is the secreted. The catalysed reaction is Random endo-hydrolysis of N-acetyl-beta-D-glucosaminide (1-&gt;4)-beta-linkages in chitin and chitodextrins.. Its function is as follows. Secreted chitinase involved in the degradation of chitin, a component of the cell walls of fungi and exoskeletal elements of some animals (including worms and arthropods). Participates in the infection process and directly acts in the penetration process of the host cuticle. The protein is Endochitinase 1 (chit1) of Metarhizium robertsii (strain ARSEF 23 / ATCC MYA-3075) (Metarhizium anisopliae (strain ARSEF 23)).